The primary structure comprises 131 residues: MALTDPLGDLLTRIRNGQRARKDSVLSPASKLRARVLDVLQREGYIRGYSEEDLAGHSGLRIELKYFEGQPAIQHVARVSKPGRRVYSGSKDLPRVRNGLGITIVSTPRGVLSDAEAREQNVGGEVLAEVF.

It belongs to the universal ribosomal protein uS8 family. Part of the 30S ribosomal subunit. Contacts proteins S5 and S12.

Its function is as follows. One of the primary rRNA binding proteins, it binds directly to 16S rRNA central domain where it helps coordinate assembly of the platform of the 30S subunit. The protein is Small ribosomal subunit protein uS8 of Rhizorhabdus wittichii (strain DSM 6014 / CCUG 31198 / JCM 15750 / NBRC 105917 / EY 4224 / RW1) (Sphingomonas wittichii).